Consider the following 959-residue polypeptide: Kinesin-like protein NACK1 (959 aa).

A disordered region spans residues M1–E28. Residues K30 to V353 enclose the Kinesin motor domain. Residue G117–T124 coordinates ATP. T145 is subject to Phosphothreonine. The stretch at V362–G429 forms a coiled coil. Disordered stretches follow at residues V417 to P438, S451 to S473, L598 to S640, and N658 to M700. Basic and acidic residues-rich tracts occupy residues D418–G429 and L454–R466. A coiled-coil region spans residues K557–L598. Residues S600 to T611 are compositionally biased toward low complexity. Positions K613–L623 are enriched in basic residues. Residues N630–S640 are compositionally biased toward polar residues. Phosphothreonine occurs at positions 675 and 690. The required for the binding to NPK1 stretch occupies residues S685–L756.

It belongs to the TRAFAC class myosin-kinesin ATPase superfamily. Kinesin family. KIN-7 subfamily. In terms of assembly, interacts (via C-terminus) with NPK1 (via C-terminus). Post-translationally, phosphorylated at Thr-145, Thr-675 and Thr-690 by CDKAs and CDKBs. The phosphorylation occurs before metaphase and inhibits the interaction with NPK1 preventing the transition to cytokinesis.

It is found in the cytoplasm. The protein localises to the nucleus. The protein resides in the cytoskeleton. It localises to the phragmoplast. Probable plus end-directed motor protein that functions in the NACK-PQR (NPK1-NQK1/MEK1-NRK1) MAP kinase signaling pathway, which is essential for somatic cell cytokinesis, especially for the cell-plate formation and its expansion. Regulates the activity and the localization of NPK1 by association through the non-catalytic region of the kinase. This is Kinesin-like protein NACK1 (NACK1) from Nicotiana tabacum (Common tobacco).